The following is a 233-amino-acid chain: Small ribosomal subunit protein uS3 (233 aa).

The region spanning 39 to 107 (VRQFLNKELE…PAQINIAEVR (69 aa)) is the KH type-2 domain.

The protein belongs to the universal ribosomal protein uS3 family. Part of the 30S ribosomal subunit. Forms a tight complex with proteins S10 and S14.

Functionally, binds the lower part of the 30S subunit head. Binds mRNA in the 70S ribosome, positioning it for translation. In Edwardsiella ictaluri (strain 93-146), this protein is Small ribosomal subunit protein uS3.